The primary structure comprises 333 residues: Phosphoribosylformylglycinamidine cyclo-ligase (333 aa).

Belongs to the AIR synthase family.

The protein resides in the cytoplasm. It carries out the reaction 2-formamido-N(1)-(5-O-phospho-beta-D-ribosyl)acetamidine + ATP = 5-amino-1-(5-phospho-beta-D-ribosyl)imidazole + ADP + phosphate + H(+). The protein operates within purine metabolism; IMP biosynthesis via de novo pathway; 5-amino-1-(5-phospho-D-ribosyl)imidazole from N(2)-formyl-N(1)-(5-phospho-D-ribosyl)glycinamide: step 2/2. The chain is Phosphoribosylformylglycinamidine cyclo-ligase from Clostridium perfringens (strain 13 / Type A).